We begin with the raw amino-acid sequence, 508 residues long: MEILRTKSQSAAVVIGISKFFDEKENRDVIVTASDFKRNNAFIFKDSGNYFLGLENIFRNSLDELKDILILAGGSISKSKITQAGLSHMITFLEKLCLSDDAGVNKALIFIVFQIHDSSQRRGGVCTLFDVLYNYLVQRKLNQESEFLSYGTYKEKKYIYINGKTVTYVCKNADALTIKELANSKSHMTYADTIGSFRKNASGMDAVTFLTVKMDTMHTASIFGKTYNIGQLYYRQLNVEVNTLKKVLANIDDHSRVKMHGNSRDGFVKRLDDAGKSRATGLIRALDHSNSIRFKSIGMGRDEKLSYVVDSCFIRKMQNGRGLCVTIDNINKLIEHKLVHDCGIGRTCSCGAKACDDESLLDQLAERGHDVVANAKEAMSAMCDDEEHAEKIAVTKSDAKLDDRIVQGKGSRYMSASVYRSRLNTESTTTNNAQSPVSDPVNASANVKTSPAGTHTDESVMKKEDHGVIVNESTTFKINSDVVFDAAEATFADTSSGLSSLLKTKMKF.

The span at 424-453 (NTESTTTNNAQSPVSDPVNASANVKTSPAG) shows a compositional bias: polar residues. The segment at 424-464 (NTESTTTNNAQSPVSDPVNASANVKTSPAGTHTDESVMKKE) is disordered. The segment covering 455 to 464 (HTDESVMKKE) has biased composition (basic and acidic residues).

This is Non-structural protein 1 (Segment-5) from Banna virus (BAV).